The chain runs to 496 residues: Glycerol kinase (496 aa).

T12 provides a ligand contact to ADP. The ATP site is built by T12, T13, and S14. T12 is a binding site for sn-glycerol 3-phosphate. R16 serves as a coordination point for ADP. Sn-glycerol 3-phosphate-binding residues include R82, E83, and Y134. Residues R82, E83, and Y134 each contribute to the glycerol site. Residue H230 is modified to Phosphohistidine; by HPr. D244 serves as a coordination point for sn-glycerol 3-phosphate. Glycerol contacts are provided by D244 and Q245. Residues T266 and G309 each coordinate ADP. ATP is bound by residues T266, G309, Q313, and G410. ADP-binding residues include G410 and N414.

This sequence belongs to the FGGY kinase family. As to quaternary structure, homotetramer and homodimer (in equilibrium). In terms of processing, the phosphoenolpyruvate-dependent sugar phosphotransferase system (PTS), including enzyme I, and histidine-containing protein (HPr) are required for the phosphorylation, which leads to the activation of the enzyme.

The catalysed reaction is glycerol + ATP = sn-glycerol 3-phosphate + ADP + H(+). The protein operates within polyol metabolism; glycerol degradation via glycerol kinase pathway; sn-glycerol 3-phosphate from glycerol: step 1/1. With respect to regulation, activated by phosphorylation and inhibited by fructose 1,6-bisphosphate (FBP). Its function is as follows. Key enzyme in the regulation of glycerol uptake and metabolism. Catalyzes the phosphorylation of glycerol to yield sn-glycerol 3-phosphate. This Bacillus cereus (strain G9842) protein is Glycerol kinase.